Reading from the N-terminus, the 500-residue chain is MCPRHPEPVPLAHPLPVLKEALEKVDQILRQAMSAPGVAAMSAVVIHNDTVLWTGNFGKKNGSDPASGAPNEYTMYRISSISKIFPVLMLYRLWEEGIVASLDDPLERYASTFTINNPLGLASAEQQGLILRRMASQLSGLPRRLRSTSLLWKGSTQEALNLLKDDVLVVDPGTRCHYSTLAFSLLAHVLAAHTAQGDYQRWVSENVLEPLGMADTGFDLTPDVRARLAAGFYGSGRPAPLYDLGWYRPSGQMYSTAADLAKLAVALLGGGPRRLLRPDAAKTLLAPLLACPGAYFANETGTPWEFHAQRGYRVVRKDGDLDGYAATFSLVPPLRLGLVLLLAGPRPPGPDLVARAYDELLPALERALREAEPGPAPPPTAHPFAGYFTFANLTFYEVRAGPAGELRLRQFGPRVEALVPPAFRTLALRHLHGRVFQLHVAHEFPCALPLGDAWLSLEAQHGQLVNFYPLDHHGLSPGFDVPGLNTYRVLRLRGKPVFKT.

This sequence belongs to the beta-lactamase family.

The chain is Putative beta-lactamase-like 1 (LACTBL1) from Homo sapiens (Human).